A 321-amino-acid chain; its full sequence is Ribosomal RNA small subunit methyltransferase H (321 aa).

S-adenosyl-L-methionine-binding positions include 40-42, aspartate 60, phenylalanine 84, aspartate 106, and glutamine 113; that span reads GGH.

Belongs to the methyltransferase superfamily. RsmH family.

The protein localises to the cytoplasm. The enzyme catalyses cytidine(1402) in 16S rRNA + S-adenosyl-L-methionine = N(4)-methylcytidine(1402) in 16S rRNA + S-adenosyl-L-homocysteine + H(+). Functionally, specifically methylates the N4 position of cytidine in position 1402 (C1402) of 16S rRNA. This is Ribosomal RNA small subunit methyltransferase H from Haemophilus influenzae (strain ATCC 51907 / DSM 11121 / KW20 / Rd).